The sequence spans 283 residues: MFRPASRALLRAPTPAVGVARGPTRRFISSSTGSTKPRSWKNTFIRVGLASGAVYYYNTSSVFAETPSLSFRPEAQPKHEDGKSLPTLDSIKPKSREEKKAPAAAADAAATPASTGANAQSESPLKSAEELEAEADQQAAFNPETGEINWDCPCLGGMAYGPCGEEFRAAFSCFVYSEEEPKGMDCIDKFKAMQDCFRAHPDVYGAELDDDEEAGAEANAAGVEQPLAAEVDASVPVEKHEQAKEVRDEVKSAAGEVAESEEVVPKALDVSEQEKTPEQQTEK.

The transit peptide at Met1 to Thr35 directs the protein to the mitochondrion. Topologically, residues Lys36–Arg46 are mitochondrial matrix. A helical; Signal-anchor for type II membrane protein membrane pass occupies residues Val47 to Ala64. Over Glu65–Lys283 the chain is Mitochondrial intermembrane. Residues Arg72–Asp136 are disordered. The span at Ile91 to Ala101 shows a compositional bias: basic and acidic residues. A compositionally biased stretch (low complexity) spans Pro102–Ala119. Disulfide bonds link Cys152-Cys154, Cys163-Cys196, and Cys173-Cys186. Positions Tyr160 to Tyr204 constitute a CHCH domain. Short sequence motifs (cx9C motif) lie at residues Cys163–Cys173 and Cys186–Cys196. The disordered stretch occupies residues Asp211–Lys283. 2 stretches are compositionally biased toward basic and acidic residues: residues Val237 to Lys251 and Glu272 to Lys283.

As to quaternary structure, monomer. Cu(2+) is required as a cofactor. It depends on Zn(2+) as a cofactor.

Its subcellular location is the mitochondrion inner membrane. Required for the import and folding of small cysteine-containing proteins (small Tim) in the mitochondrial intermembrane space (IMS). Forms a redox cycle with ERV1 that involves a disulfide relay system. Precursor proteins to be imported into the IMS are translocated in their reduced form into the mitochondria. The oxidized form of MIA40 forms a transient intermolecular disulfide bridge with the reduced precursor protein, resulting in oxidation of the precursor protein that now contains an intramolecular disulfide bond and is able to undergo folding in the IMS. In Emericella nidulans (strain FGSC A4 / ATCC 38163 / CBS 112.46 / NRRL 194 / M139) (Aspergillus nidulans), this protein is Mitochondrial intermembrane space import and assembly protein 40 (mia40).